The following is a 362-amino-acid chain: Phosphoserine aminotransferase (362 aa).

An L-glutamate-binding site is contributed by arginine 43. Pyridoxal 5'-phosphate is bound by residues 77 to 78 (AS), tryptophan 103, threonine 153, aspartate 173, and glutamine 196. Residue lysine 197 is modified to N6-(pyridoxal phosphate)lysine. 238 to 239 (NT) lines the pyridoxal 5'-phosphate pocket.

Belongs to the class-V pyridoxal-phosphate-dependent aminotransferase family. SerC subfamily. Homodimer. Pyridoxal 5'-phosphate is required as a cofactor.

The protein resides in the cytoplasm. The enzyme catalyses O-phospho-L-serine + 2-oxoglutarate = 3-phosphooxypyruvate + L-glutamate. It carries out the reaction 4-(phosphooxy)-L-threonine + 2-oxoglutarate = (R)-3-hydroxy-2-oxo-4-phosphooxybutanoate + L-glutamate. It participates in amino-acid biosynthesis; L-serine biosynthesis; L-serine from 3-phospho-D-glycerate: step 2/3. Its function is as follows. Catalyzes the reversible conversion of 3-phosphohydroxypyruvate to phosphoserine and of 3-hydroxy-2-oxo-4-phosphonooxybutanoate to phosphohydroxythreonine. The chain is Phosphoserine aminotransferase from Lysinibacillus sphaericus (strain C3-41).